Reading from the N-terminus, the 197-residue chain is MNATVVPPYSGHWLTNTDRMGGLAYGIGVSIGILMLITTITLTSYYCTRSHISASPTTTPRTRRRQRESNGTLPPGQERFDFEDDESDTVVVEVLGLTEEVIKGFPKLPYEEARVSYSLQKESSTTSCCSICLADYKKMDMIRVLPDCNHLFHDNCVDPWLRLHPTCPVCRTSPLPSPAMTPVADVVPFSRRPMMDI.

The helical transmembrane segment at 20–40 (MGGLAYGIGVSIGILMLITTI) threads the bilayer. Residues 53-80 (SASPTTTPRTRRRQRESNGTLPPGQERF) are disordered. An RING-type; atypical zinc finger spans residues 129 to 171 (CSICLADYKKMDMIRVLPDCNHLFHDNCVDPWLRLHPTCPVCR).

The protein belongs to the RING-type zinc finger family. ATL subfamily.

Its subcellular location is the membrane. The catalysed reaction is S-ubiquitinyl-[E2 ubiquitin-conjugating enzyme]-L-cysteine + [acceptor protein]-L-lysine = [E2 ubiquitin-conjugating enzyme]-L-cysteine + N(6)-ubiquitinyl-[acceptor protein]-L-lysine.. The protein operates within protein modification; protein ubiquitination. The protein is Putative RING-H2 finger protein ATL71 (ATL71) of Arabidopsis thaliana (Mouse-ear cress).